The following is a 453-amino-acid chain: TATA box-binding protein-associated factor RNA polymerase I subunit A (453 aa).

As to quaternary structure, component of the transcription factor SL1/TIF-IB complex, composed of TBP and at least TAF1A, TAF1B, TAF1C and TAF1D. In the complex interacts directly with TBP, TAF1A and TAF1B. Interaction of the SL1/TIF-IB subunits with TBP excludes interaction of TBP with the transcription factor IID (TFIID) subunits. Interacts with UBFT. Interacts with CEBPA (isoform 1 and isoform 4). Part of Pol I pre-initiation complex (PIC), in which Pol I core assembles with RRN3 and promoter-bound UTBF and SL1/TIF-IB complex.

Its subcellular location is the nucleus. The protein resides in the nucleolus. Functionally, component of the transcription factor SL1/TIF-IB complex, which is involved in the assembly of the PIC (pre-initiation complex) during RNA polymerase I-dependent transcription. The rate of PIC formation probably is primarily dependent on the rate of association of SL1/TIF-IB with the rDNA promoter. SL1/TIF-IB is involved in stabilization of nucleolar transcription factor 1/UBTF on rDNA. Formation of SL1/TIF-IB excludes the association of TBP with TFIID subunits. The chain is TATA box-binding protein-associated factor RNA polymerase I subunit A (Taf1a) from Mus musculus (Mouse).